A 103-amino-acid chain; its full sequence is Truncated secreted TNF-receptor-like protein A53R (103 aa).

One copy of the TNFR-Cys 1 repeat lies at serine 36–glutamate 73. 3 disulfide bridges follow: cysteine 37-cysteine 50, cysteine 51-cysteine 64, and cysteine 54-cysteine 72. A TNFR-Cys 2; truncated repeat occupies arginine 74 to arginine 103.

It belongs to the poxviridae A53R protein family.

In Vaccinia virus (strain Western Reserve) (VACV), this protein is Truncated secreted TNF-receptor-like protein A53R.